A 306-amino-acid chain; its full sequence is Putative beta-lactamase HcpD (306 aa).

The signal sequence occupies residues 1 to 25 (MIKSWTKKWFLILFLMASCSSYLVA). TPR repeat units lie at residues 28-61 (GEKYFKMATQAFKRGDYHKAVAFYKRSCNLRVGV), 96-133 (HLACASLGSMYEDGDGVQKNLPKAIYYYRRGCHLKGGV), 168-205 (GISCNFVGYMYRNAKGVQKDLKKALANFKRGCHLKDGA), and 240-277 (GSGCHNVAVMYYTGKGVPKDLDKAISYYKKGCTLGFSG). 7 disulfide bridges follow: C55–C63, C91–C99, C127–C135, C163–C171, C199–C207, C235–C243, and C271–C279.

The protein belongs to the hcp beta-lactamase family.

Its subcellular location is the secreted. It carries out the reaction a beta-lactam + H2O = a substituted beta-amino acid. May hydrolyze 6-aminopenicillinic acid and 7-aminocephalosporanic acid (ACA) derivatives. Binds to penicillin. This Helicobacter pylori (strain ATCC 700392 / 26695) (Campylobacter pylori) protein is Putative beta-lactamase HcpD (hcpD).